The primary structure comprises 532 residues: NADH-quinone oxidoreductase subunit N 2 (532 aa).

Transmembrane regions (helical) follow at residues 37–57 (VAPP…DLFL), 63–83 (RLLG…LIPL), 107–127 (FTLV…LLSL), 133–153 (LPAG…ALLP), 158–178 (LATL…LVGI), 192–212 (FFLS…FVYA), 241–261 (VALT…HFWV), 276–296 (LSVV…VVAF), 302–322 (VWGP…NVAA), 336–356 (LLAW…AAAA), 367–387 (VAYA…AAVV), 411–431 (LALG…IGLF), 444–464 (GLGW…YYYL), and 504–524 (TAIV…QTVL).

It belongs to the complex I subunit 2 family. As to quaternary structure, NDH-1 is composed of 14 different subunits. Subunits NuoA, H, J, K, L, M, N constitute the membrane sector of the complex.

It localises to the cell membrane. The catalysed reaction is a quinone + NADH + 5 H(+)(in) = a quinol + NAD(+) + 4 H(+)(out). Functionally, NDH-1 shuttles electrons from NADH, via FMN and iron-sulfur (Fe-S) centers, to quinones in the respiratory chain. The immediate electron acceptor for the enzyme in this species is believed to be a menaquinone. Couples the redox reaction to proton translocation (for every two electrons transferred, four hydrogen ions are translocated across the cytoplasmic membrane), and thus conserves the redox energy in a proton gradient. The chain is NADH-quinone oxidoreductase subunit N 2 from Streptomyces griseus subsp. griseus (strain JCM 4626 / CBS 651.72 / NBRC 13350 / KCC S-0626 / ISP 5235).